The chain runs to 108 residues: DVQMIQSPSSLSASLGDIVTMTCQASQGTNINLNWFQQKPGKAPKLLIYGASILEAGVPSRFSGRRYGTDFTLTISSLEDEDMATYFCLQHSYLPYTFGGGTKLEKKR.

Residues 1–23 (DVQMIQSPSSLSASLGDIVTMTC) are framework-1. The cysteines at positions 23 and 88 are disulfide-linked. Residues 24 to 34 (QASQGTNINLN) form a complementarity-determining-1 region. The segment at 35–49 (WFQQKPGKAPKLLIY) is framework-2. A complementarity-determining-2 region spans residues 50–56 (GASILEA). A framework-3 region spans residues 57–88 (GVPSRFSGRRYGTDFTLTISSLEDEDMATYFC). Residues 89–97 (LQHSYLPYT) are complementarity-determining-3. The interval 98-108 (FGGGTKLEKKR) is framework-4.

The protein is Ig kappa chain V-V region EPC 109 of Mus musculus (Mouse).